Consider the following 1807-residue polypeptide: Triacetic acid lactone synthase cle1 (1807 aa).

The region spanning 107 to 280 is the Starter acyltransferase (SAT) domain; it reads LAPLTVIIHI…ANVPVNGRYH (174 aa). The Ketosynthase family 3 (KS3) domain occupies 385-795; sequence DTSIAIIGAA…GNNTAIIICQ (411 aa). Active-site for beta-ketoacyl synthase activity residues include Cys-540, His-675, and His-718. The Malonyl-CoA:ACP transacylase (MAT) domain occupies 919-1176; the sequence is SKAVYDSSYH…LGPCIWLEAG (258 aa). An N-terminal hotdog fold region spans residues 1272–1398; the sequence is PVIDGLISLE…GTVIVDDERT (127 aa). The 302-residue stretch at 1272–1573 folds into the PKS/mFAS DH domain; the sequence is PVIDGLISLE…FIRTSTSALQ (302 aa). Catalysis depends on His-1304, which acts as the Proton acceptor; for dehydratase activity. The C-terminal hotdog fold stretch occupies residues 1416–1573; the sequence is TVFSAPRGVA…FIRTSTSALQ (158 aa). Residue Asp-1475 is the Proton donor; for dehydratase activity of the active site. In terms of domain architecture, Carrier 1 spans 1605–1679; it reads ANVWSLTVNL…IICERITAQT (75 aa). Ser-1639 is subject to O-(pantetheine 4'-phosphoryl)serine. Positions 1690–1720 are disordered; that stretch reads GNSTSNTTSSSSQCTPSSSFESDSDTQATEL. The segment covering 1692 to 1710 has biased composition (low complexity); sequence STSNTTSSSSQCTPSSSFE. The 77-residue stretch at 1721-1797 folds into the Carrier 2 domain; sequence SLSAPTMEKV…DLHALVMRRG (77 aa). At Ser-1757 the chain carries O-(pantetheine 4'-phosphoryl)serine.

It depends on pantetheine 4'-phosphate as a cofactor.

Its pathway is secondary metabolite biosynthesis; terpenoid biosynthesis. Its function is as follows. Non-reducing polyketide synthase; part of the cluster A that mediates the biosynthesis of chevalone E and its oxidized derivatives that possess a unique five-membered lactone ring and can synergistically enhance the cytotoxicity of doxorubicin (DOX) in breast cancer cells. Within the pathway, cle1 takes part to the biosynthesis of the molecular scaffold via the synthesis the alpha-pyrone triacetic acid lactone (TAL) from one molecule of acetyl-CoA and two molecules of malonyl-CoA. The molecular scaffold is commonly biosynthesized by a series of enzymes including the non-reducing polyketide synthase (NR-PKS) cle1 that produces the alpha-pyrone triacetic acid lactone (TAL); The membrane-bound prenyltransferase cle5 that accepts TAL as its substrate to perform a C-3 geranylgeranylation reaction, in which the pathway-dedicated GGPS cle6 is required to provide GGPP, the other substrate of cle5; the FAD-dependent monooxygenase Cle3 that forms an (S)-epoxide ring at the terminal olefin of the geranylgeranyl group; and the terpene cyclase Cle7 that catalyzes the cyclization of the prenyl group that yields the pentacyclic pathway intermediate chevalone E. Chevalone E can derivatize into seven new oxidized analogs by the cytochrome P450 monooxygenases cle2 (acting at C-20) and cle4 (acting at C-11 and C-12). The chain is Triacetic acid lactone synthase cle1 from Aspergillus versicolor.